Here is a 609-residue protein sequence, read N- to C-terminus: Zinc metalloproteinase-disintegrin-like (609 aa).

The signal sequence occupies residues 1–20 (MIQVLLVTICLAALPYQGSS). A propeptide spanning residues 21-189 (IILESGNVND…KKASQLVVTA (169 aa)) is cleaved from the precursor. Residues 198-393 (RFVELVLVVD…QNPECIVNEP (196 aa)) enclose the Peptidase M12B domain. Ca(2+)-binding residues include Glu-201 and Asp-285. 3 disulfide bridges follow: Cys-308–Cys-388, Cys-348–Cys-372, and Cys-350–Cys-355. Residue His-333 coordinates Zn(2+). The active site involves Glu-334. The Zn(2+) site is built by His-337 and His-343. Residue Asn-371 is glycosylated (N-linked (GlcNAc...) asparagine). Residues Cys-388, Asn-391, Val-403, Asn-406, Leu-408, Glu-410, Glu-413, and Asp-416 each contribute to the Ca(2+) site. A Disintegrin domain is found at 401–487 (PPVCGNELLE…ECPADVFHKN (87 aa)). 14 cysteine pairs are disulfide-bonded: Cys-404–Cys-433, Cys-415–Cys-428, Cys-417–Cys-423, Cys-427–Cys-450, Cys-441–Cys-447, Cys-446–Cys-472, Cys-459–Cys-479, Cys-466–Cys-498, Cys-491–Cys-503, Cys-510–Cys-560, Cys-525–Cys-571, Cys-538–Cys-548, Cys-555–Cys-597, and Cys-591–Cys-602. The D/ECD-tripeptide motif lies at 465-467 (ECD). Ca(2+) is bound by residues Asp-467, Pro-468, Glu-470, Asp-482, and Val-483.

The protein belongs to the venom metalloproteinase (M12B) family. P-III subfamily. P-IIIa sub-subfamily. As to quaternary structure, monomer. It depends on Zn(2+) as a cofactor. In terms of tissue distribution, expressed by the venom gland.

The protein localises to the secreted. Functionally, this protein is a zinc metalloprotease from snake venom that possesses hemorrhagic activity. This Crotalus durissus durissus (Central American rattlesnake) protein is Zinc metalloproteinase-disintegrin-like.